Here is a 230-residue protein sequence, read N- to C-terminus: Claudin-2 (230 aa).

Topologically, residues 1–7 are cytoplasmic; sequence MASLGLQ. The helical transmembrane segment at 8–28 threads the bilayer; it reads LVGYILGLLGLLGTLVAMLLP. Over 29-81 the chain is Extracellular; that stretch reads SWRTSSYVGTSIVTAVGFSKGLWMECATHSTGITQCDIYSTLLGLPADIQAAQ. An intrachain disulfide couples cysteine 54 to cysteine 64. A helical transmembrane segment spans residues 82–102; the sequence is AMMVTSSAISSLACIVSVVGM. Topologically, residues 103-116 are cytoplasmic; the sequence is RCTVFCQDSRAKDR. Residues 117 to 137 form a helical membrane-spanning segment; sequence LAVVGGVFFIIGGLLGFIPVA. The Extracellular segment spans residues 138–162; that stretch reads WNLHGILRDFYSPLVPDSMKFEIGE. A helical membrane pass occupies residues 163–183; that stretch reads ALYLGIISSLFSLVAGIILCF. Residues 184–230 are Cytoplasmic-facing; it reads SCPLQGNRSDYYDSYQAQPLATRGSPRPGQPPKAKSEFNSYSLTGYV. The segment at 205 to 230 is disordered; it reads TRGSPRPGQPPKAKSEFNSYSLTGYV. Residue lysine 218 forms a Glycyl lysine isopeptide (Lys-Gly) (interchain with G-Cter in SUMO) linkage. Residues serine 219 and serine 223 each carry the phosphoserine modification. Residues 220–230 are compositionally biased toward polar residues; that stretch reads EFNSYSLTGYV. An interaction with TJP1, TJP2 and TJP3 region spans residues 229-230; the sequence is YV.

The protein belongs to the claudin family. In terms of assembly, can form homo- and heteropolymers with other claudins to mediate paracellular barrier and channel functions of tight junctions in response to physiological stimuli. Homopolymers interact with CLDN3, but not CLDN1, homopolymers. Directly interacts with TJP1/ZO-1, TJP2/ZO-2 and TJP3/ZO-3. In terms of processing, the disulfide bond is necessary for pore formation, but is not required for correct protein trafficking.

It localises to the cell junction. The protein localises to the tight junction. The protein resides in the cell membrane. The enzyme catalyses Na(+)(in) = Na(+)(out). It catalyses the reaction K(+)(in) = K(+)(out). It carries out the reaction Rb(+)(in) = Rb(+)(out). The catalysed reaction is Li(+)(in) = Li(+)(out). The enzyme catalyses Cs(+)(in) = Cs(+)(out). It catalyses the reaction Ca(2+)(in) = Ca(2+)(out). It carries out the reaction methylamine(out) = methylamine(in). The catalysed reaction is choline(out) = choline(in). The enzyme catalyses H2O(in) = H2O(out). Functionally, forms paracellular channels: polymerizes in tight junction strands with cation- and water-selective channels through the strands, conveying epithelial permeability in a process known as paracellular tight junction permeability. In intestinal epithelium, allows for sodium and water fluxes from the peritoneal side to the lumen of the intestine to regulate nutrient absorption and clear enteric pathogens as part of mucosal immune response. In kidney, allows passive sodium and calcium reabsorption across proximal tubules from the lumen back to the bloodstream. In the hepatobiliary tract, allows paracellular water and cation fluxes in the hepatic perivenous areas and biliary epithelium to generate bile flow and maintain osmotic gradients. The chain is Claudin-2 (CLDN2) from Canis lupus familiaris (Dog).